A 102-amino-acid polypeptide reads, in one-letter code: ATP synthase subunit c (102 aa).

A run of 2 helical transmembrane segments spans residues 34–54 (IGAGVTMIAGSTVGIGQGYIF) and 80–100 (AVSESTAIYGLLISFILIFVA).

It belongs to the ATPase C chain family. As to quaternary structure, F-type ATPases have 2 components, F(1) - the catalytic core - and F(0) - the membrane proton channel. F(1) has five subunits: alpha(3), beta(3), gamma(1), delta(1), epsilon(1). F(0) has three main subunits: a(1), b(2) and c(10-14). The alpha and beta chains form an alternating ring which encloses part of the gamma chain. F(1) is attached to F(0) by a central stalk formed by the gamma and epsilon chains, while a peripheral stalk is formed by the delta and b chains.

The protein resides in the cell membrane. Its function is as follows. F(1)F(0) ATP synthase produces ATP from ADP in the presence of a proton or sodium gradient. F-type ATPases consist of two structural domains, F(1) containing the extramembraneous catalytic core and F(0) containing the membrane proton channel, linked together by a central stalk and a peripheral stalk. During catalysis, ATP synthesis in the catalytic domain of F(1) is coupled via a rotary mechanism of the central stalk subunits to proton translocation. Functionally, key component of the F(0) channel; it plays a direct role in translocation across the membrane. A homomeric c-ring of between 10-14 subunits forms the central stalk rotor element with the F(1) delta and epsilon subunits. This is ATP synthase subunit c from Mycoplasma genitalium (strain ATCC 33530 / DSM 19775 / NCTC 10195 / G37) (Mycoplasmoides genitalium).